The chain runs to 249 residues: Phosphoadenosine 5'-phosphosulfate reductase (249 aa).

Cys-230 functions as the Nucleophile; cysteine thiosulfonate intermediate in the catalytic mechanism.

Belongs to the PAPS reductase family. CysH subfamily.

The protein localises to the cytoplasm. The catalysed reaction is [thioredoxin]-disulfide + sulfite + adenosine 3',5'-bisphosphate + 2 H(+) = [thioredoxin]-dithiol + 3'-phosphoadenylyl sulfate. Its pathway is sulfur metabolism; hydrogen sulfide biosynthesis; sulfite from sulfate: step 3/3. Catalyzes the formation of sulfite from phosphoadenosine 5'-phosphosulfate (PAPS) using thioredoxin as an electron donor. This chain is Phosphoadenosine 5'-phosphosulfate reductase, found in Synechocystis sp. (strain ATCC 27184 / PCC 6803 / Kazusa).